A 611-amino-acid chain; its full sequence is Elongation factor 1 alpha-like protein (611 aa).

Disordered regions lie at residues 1 to 21 (MAYS…DEGE) and 105 to 138 (SISQ…DEKT). Phosphoserine is present on serine 124. Positions 126 to 138 (GERNGEEANDEKT) are enriched in basic and acidic residues. In terms of domain architecture, tr-type G spans 165–390 (LPHLSFVVLG…LENAAFKISK (226 aa)). Positions 174–181 (GHVDAGKS) are G1. 174–181 (GHVDAGKS) contacts GTP. The G2 stretch occupies residues 230-234 (GVTVS). A G3 region spans residues 251 to 254 (DAPG). GTP-binding positions include 313 to 316 (NKMD) and 352 to 354 (SGF). The G4 stretch occupies residues 313-316 (NKMD). Positions 352–354 (SGF) are G5.

Belongs to the TRAFAC class translation factor GTPase superfamily. Classic translation factor GTPase family. As to quaternary structure, component of the Dom34-Hbs1 complex, also named Pelota-HBS1L complex, composed of DOM34 and HBS1.

It is found in the cytoplasm. It catalyses the reaction GTP + H2O = GDP + phosphate + H(+). Functionally, GTPase component of the Dom34-Hbs1 complex, a complex that recognizes stalled ribosomes and triggers the No-Go Decay (NGD) pathway. The Dom34-Hbs1 complex recognizes ribosomes stalled at the 3' end of an mRNA and engages stalled ribosomes by destabilizing mRNA in the mRNA channel. Following ribosome-binding, the Pelota-HBS1L complex promotes the disassembly of stalled ribosomes, followed by degradation of damaged mRNAs as part of the NGD pathway. The Dom34-Hbs1 complex is also involved in non-functional rRNA decay. This chain is Elongation factor 1 alpha-like protein, found in Saccharomyces cerevisiae (strain ATCC 204508 / S288c) (Baker's yeast).